Reading from the N-terminus, the 309-residue chain is Methionyl-tRNA formyltransferase (309 aa).

107 to 110 contacts (6S)-5,6,7,8-tetrahydrofolate; it reads SLLP.

The protein belongs to the Fmt family.

It catalyses the reaction L-methionyl-tRNA(fMet) + (6R)-10-formyltetrahydrofolate = N-formyl-L-methionyl-tRNA(fMet) + (6S)-5,6,7,8-tetrahydrofolate + H(+). Its function is as follows. Attaches a formyl group to the free amino group of methionyl-tRNA(fMet). The formyl group appears to play a dual role in the initiator identity of N-formylmethionyl-tRNA by promoting its recognition by IF2 and preventing the misappropriation of this tRNA by the elongation apparatus. The protein is Methionyl-tRNA formyltransferase of Borrelia hermsii (strain HS1 / DAH).